A 215-amino-acid chain; its full sequence is Riboflavin synthase (215 aa).

Lumazine-binding repeat units follow at residues 1–96 (MFTG…FGGH) and 97–193 (FVSG…YRFL). 2,4-dihydroxypteridine contacts are provided by residues 4 to 6 (GII), 47 to 49 (CLT), 61 to 66 (DVMPET), 100 to 102 (GHV), Lys-135, 144 to 146 (SLT), and 158 to 163 (SLIPHT).

In terms of assembly, homotrimer. Can interact with 6,7-dimethyl-8-ribityllumazine synthase, forming a lumazine synthase/riboflavin synthase complex, also designated as 'heavy riboflavin synthase complex', which consists of a trimer of riboflavin synthase enclosed within an icosahedral structure composed of 60 subunits of 6,7-dimethyl-8-ribityllumazine synthase.

It carries out the reaction 2 6,7-dimethyl-8-(1-D-ribityl)lumazine + H(+) = 5-amino-6-(D-ribitylamino)uracil + riboflavin. It functions in the pathway cofactor biosynthesis; riboflavin biosynthesis; riboflavin from 2-hydroxy-3-oxobutyl phosphate and 5-amino-6-(D-ribitylamino)uracil: step 2/2. Is activated by sulfite ions. Catalyzes the dismutation of two molecules of 6,7-dimethyl-8-ribityllumazine, resulting in the formation of riboflavin and 5-amino-6-(D-ribitylamino)uracil. The polypeptide is Riboflavin synthase (ribE) (Bacillus subtilis (strain 168)).